The primary structure comprises 678 residues: DNA ligase (678 aa).

NAD(+) is bound by residues 35 to 39 (DEEYD), 84 to 85 (SL), and E115. Catalysis depends on K117, which acts as the N6-AMP-lysine intermediate. The NAD(+) site is built by R138, E172, K288, and K312. Zn(2+) is bound by residues C406, C409, C425, and C430. Positions 589 to 678 (VQSKILSNLT…IKNLRQQKLF (90 aa)) constitute a BRCT domain.

It belongs to the NAD-dependent DNA ligase family. LigA subfamily. It depends on Mg(2+) as a cofactor. Requires Mn(2+) as cofactor.

It carries out the reaction NAD(+) + (deoxyribonucleotide)n-3'-hydroxyl + 5'-phospho-(deoxyribonucleotide)m = (deoxyribonucleotide)n+m + AMP + beta-nicotinamide D-nucleotide.. Functionally, DNA ligase that catalyzes the formation of phosphodiester linkages between 5'-phosphoryl and 3'-hydroxyl groups in double-stranded DNA using NAD as a coenzyme and as the energy source for the reaction. It is essential for DNA replication and repair of damaged DNA. This is DNA ligase from Pseudothermotoga lettingae (strain ATCC BAA-301 / DSM 14385 / NBRC 107922 / TMO) (Thermotoga lettingae).